The sequence spans 406 residues: Tryptophan synthase beta chain (406 aa).

At Lys-97 the chain carries N6-(pyridoxal phosphate)lysine.

This sequence belongs to the TrpB family. As to quaternary structure, tetramer of two alpha and two beta chains. Pyridoxal 5'-phosphate serves as cofactor.

It carries out the reaction (1S,2R)-1-C-(indol-3-yl)glycerol 3-phosphate + L-serine = D-glyceraldehyde 3-phosphate + L-tryptophan + H2O. The protein operates within amino-acid biosynthesis; L-tryptophan biosynthesis; L-tryptophan from chorismate: step 5/5. The beta subunit is responsible for the synthesis of L-tryptophan from indole and L-serine. This is Tryptophan synthase beta chain from Lacticaseibacillus casei (strain BL23) (Lactobacillus casei).